A 352-amino-acid polypeptide reads, in one-letter code: Blue-sensitive opsin (352 aa).

At 1 to 42 the chain is on the extracellular side; it reads MRGNRLVEFPDDFWIPIPLDTNNVTALSPFLVPQDHLGSPTI. The N-linked (GlcNAc...) asparagine glycan is linked to Asn23. A helical transmembrane segment spans residues 43–67; the sequence is FYSMSALMFVLFVAGTAINLLTIAC. Residues 68–79 lie on the Cytoplasmic side of the membrane; sequence TLQYKKLRSHLN. A helical membrane pass occupies residues 80-105; that stretch reads YILVNMAVANLIVASTGSSTCFVCFA. The Extracellular portion of the chain corresponds to 106–119; sequence FKYMVLGPLGCKIE. Cys116 and Cys193 form a disulfide bridge. Residues 120–139 form a helical membrane-spanning segment; it reads GFTAALGGMVSLWSLAVIAF. Residues 140–158 are Cytoplasmic-facing; sequence ERWLVICKPLGNFVFKSEH. A helical transmembrane segment spans residues 159 to 182; that stretch reads ALLCCALTWVCGLCASVPPLVGWS. The Extracellular segment spans residues 183-208; sequence RYIPEGMQCSCGPDWYTTGNKFNNES. N-linked (GlcNAc...) asparagine glycosylation is present at Asn206. Residues 209 to 236 traverse the membrane as a helical segment; sequence FVMFLFCFCFAVPFSIIVFCYSQLLFTL. Over 237-258 the chain is Cytoplasmic; the sequence is KMAAKAQADSASTQKAEKEVTR. A helical membrane pass occupies residues 259-282; the sequence is MVVVMVVAFLVCYVPYASFALWVI. Residues 283 to 290 are Extracellular-facing; that stretch reads NNRGQTFD. The helical transmembrane segment at 291 to 315 threads the bilayer; that stretch reads LRLATIPSCVSKASTVYNPVIYVLL. Lys302 bears the N6-(retinylidene)lysine mark. Over 316-352 the chain is Cytoplasmic; that stretch reads NKQFRLCMKKMLGMSADEDEESSTSQSTTEVSKVGPS. Residues 332–352 are disordered; sequence DEDEESSTSQSTTEVSKVGPS.

Belongs to the G-protein coupled receptor 1 family. Opsin subfamily. Phosphorylated on some or all of the serine and threonine residues present in the C-terminal region. In terms of tissue distribution, the color pigments are found in the cone photoreceptor cells.

The protein resides in the membrane. Visual pigments are the light-absorbing molecules that mediate vision. They consist of an apoprotein, opsin, covalently linked to cis-retinal. This Oryzias latipes (Japanese rice fish) protein is Blue-sensitive opsin.